The primary structure comprises 603 residues: DNA mismatch repair protein MutL (603 aa).

It belongs to the DNA mismatch repair MutL/HexB family.

Functionally, this protein is involved in the repair of mismatches in DNA. It is required for dam-dependent methyl-directed DNA mismatch repair. May act as a 'molecular matchmaker', a protein that promotes the formation of a stable complex between two or more DNA-binding proteins in an ATP-dependent manner without itself being part of a final effector complex. This chain is DNA mismatch repair protein MutL, found in Bradyrhizobium diazoefficiens (strain JCM 10833 / BCRC 13528 / IAM 13628 / NBRC 14792 / USDA 110).